The sequence spans 2439 residues: Centrosomal protein of 290 kDa (2439 aa).

Coiled-coil stretches lie at residues Ala-75–Glu-913 and Asn-1271–Thr-1576. Disordered regions lie at residues Glu-1802–Ala-1824, Glu-1867–Lys-1890, and Glu-2017–Glu-2048. Positions Ser-2039–Glu-2048 are enriched in basic and acidic residues. Residues Gln-2046–Asp-2394 adopt a coiled-coil conformation.

Part of the tectonic-like complex (also named B9 complex).

The protein resides in the cytoplasm. It localises to the cytoskeleton. It is found in the microtubule organizing center. Its subcellular location is the centrosome. The protein localises to the centriolar satellite. The protein resides in the nucleus. It localises to the cilium basal body. In terms of biological role, involved in early and late steps in cilia formation. May play a role in early ciliogenesis in the disappearance of centriolar satellites and in the transition of primary ciliar vesicles (PCVs) to capped ciliary vesicles (CCVs). In the ciliary transition zone is part of the tectonic-like complex which is required for tissue-specific ciliogenesis and may regulate ciliary membrane composition. Involved in regulation of the BBSome complex integrity and in ciliary targeting of selected BBSome cargos. Required for the correct localization of ciliary and phototransduction proteins in retinal photoreceptor cells; may play a role in ciliary transport processes. Involved in development of the nervous system and kidney. This Danio rerio (Zebrafish) protein is Centrosomal protein of 290 kDa (cep290).